We begin with the raw amino-acid sequence, 414 residues long: Snake venom metalloproteinase atrolysin-B (414 aa).

Residues 1-20 (MIEVLLVTICLAVFPYQGSS) form the signal peptide. A propeptide spanning residues 21–190 (IILESGNVND…KASDLNLNPD (170 aa)) is cleaved from the precursor. Pyrrolidone carboxylic acid is present on Q191. In terms of domain architecture, Peptidase M12B spans 197–393 (RYIELVVVAD…YKPQCILNKP (197 aa)). Ca(2+)-binding residues include E200 and D284. 2 disulfide bridges follow: C308-C388 and C348-C355. H333 is a Zn(2+) binding site. E334 is a catalytic residue. H337 and H343 together coordinate Zn(2+). Ca(2+)-binding residues include C388, N391, V403, N406, L408, E410, and E413. A propeptide spanning residues 394-414 (LRIDPVSTPVSGNELLEAGEE) is cleaved from the precursor.

Belongs to the venom metalloproteinase (M12B) family. P-I subfamily. In terms of assembly, monomer. Zn(2+) serves as cofactor. In terms of processing, the N-terminus is blocked. Expressed by the venom gland.

The protein localises to the secreted. The catalysed reaction is Cleavage of 5-His-|-Leu-6, 10-His-|-Leu-11, 14-Ala-|-Leu-15, 16-Tyr-|-Leu-17 and 23-Gly-|-Phe-24 of insulin B chain. Identical to the cleavage of insulin B chain by atrolysin C. Also cleaves Xaa-|-Ser bonds in glucagon.. In terms of biological role, snake venom metalloproteinase that impairs hemostasis in the envenomed animal. The chain is Snake venom metalloproteinase atrolysin-B from Crotalus atrox (Western diamondback rattlesnake).